The sequence spans 433 residues: Glutamyl-tRNA reductase (433 aa).

Residues 49-52, Ser109, 114-116, and Gln120 each bind substrate; these read TCNR and EGQ. The active-site Nucleophile is the Cys50. 198–203 serves as a coordination point for NADP(+); that stretch reads GAGRMS.

This sequence belongs to the glutamyl-tRNA reductase family. As to quaternary structure, homodimer.

It catalyses the reaction (S)-4-amino-5-oxopentanoate + tRNA(Glu) + NADP(+) = L-glutamyl-tRNA(Glu) + NADPH + H(+). It functions in the pathway porphyrin-containing compound metabolism; protoporphyrin-IX biosynthesis; 5-aminolevulinate from L-glutamyl-tRNA(Glu): step 1/2. The protein operates within porphyrin-containing compound metabolism; chlorophyll biosynthesis. Functionally, catalyzes the NADPH-dependent reduction of glutamyl-tRNA(Glu) to glutamate 1-semialdehyde (GSA). The sequence is that of Glutamyl-tRNA reductase from Prochlorococcus marinus subsp. pastoris (strain CCMP1986 / NIES-2087 / MED4).